A 421-amino-acid polypeptide reads, in one-letter code: MSPTSTATSLTDRFSAAKRASIALAIASNAEKDAALRGIAEGVLAAADSILAANAVDLATGRENGLSTGLLDRLTLTPARLQGLADAVLEIVALTDPVGQTVRGSALPNGVKITQIRVPFGVVGAIYEARPNVTIDIAALALKSGNAAVLRGGSAAIATNGVLVGVIQEALAAAGLPADAVQTIDDFGREGANGLMQARGFVDVLIPRGSAGLIQIVVTQSAVPVIETGAGVVHIVLDESAREDWAVDIVRNAKAQRPSACNAVETVLVLRAAAERLLSPVLGALTEAGVTIHADEIALPHSPGAIAVTAEDYATEHMSLDVSVRVVDDLDAAIEHIRTHSTQHTEAIVTNDLANAERFLNEVDSAVVMVNASTRFTDGGEFGFGAEVGISTQKLHARGPMGLPELTSTKWIVRGAGQVRS.

The protein belongs to the gamma-glutamyl phosphate reductase family.

The protein resides in the cytoplasm. It carries out the reaction L-glutamate 5-semialdehyde + phosphate + NADP(+) = L-glutamyl 5-phosphate + NADPH + H(+). The protein operates within amino-acid biosynthesis; L-proline biosynthesis; L-glutamate 5-semialdehyde from L-glutamate: step 2/2. Its function is as follows. Catalyzes the NADPH-dependent reduction of L-glutamate 5-phosphate into L-glutamate 5-semialdehyde and phosphate. The product spontaneously undergoes cyclization to form 1-pyrroline-5-carboxylate. This chain is Gamma-glutamyl phosphate reductase, found in Leifsonia xyli subsp. xyli (strain CTCB07).